Reading from the N-terminus, the 244-residue chain is Flavin-dependent thymidylate synthase (244 aa).

Residues Pro7–Asp199 form the ThyX domain. FAD-binding positions include Ser60 and Arg83–Arg85. DUMP contacts are provided by residues Gln80–Arg83, Ser93–Arg95, and Arg137. A ThyX motif motif is present at residues Arg83 to Ser93. FAD-binding positions include Asn153 to Arg155 and Asn160. Arg165 contacts dUMP. The active-site Involved in ionization of N3 of dUMP, leading to its activation is the Arg165.

It belongs to the thymidylate synthase ThyX family. Homotetramer. It depends on FAD as a cofactor.

The enzyme catalyses dUMP + (6R)-5,10-methylene-5,6,7,8-tetrahydrofolate + NADPH + H(+) = dTMP + (6S)-5,6,7,8-tetrahydrofolate + NADP(+). Its pathway is pyrimidine metabolism; dTTP biosynthesis. In terms of biological role, catalyzes the reductive methylation of 2'-deoxyuridine-5'-monophosphate (dUMP) to 2'-deoxythymidine-5'-monophosphate (dTMP) while utilizing 5,10-methylenetetrahydrofolate (mTHF) as the methyl donor, and NADPH and FADH(2) as the reductant. The protein is Flavin-dependent thymidylate synthase of Pyrobaculum aerophilum (strain ATCC 51768 / DSM 7523 / JCM 9630 / CIP 104966 / NBRC 100827 / IM2).